Reading from the N-terminus, the 239-residue chain is Methylthioribulose-1-phosphate dehydratase (239 aa).

Position 94 (Cys94) interacts with substrate. 2 residues coordinate Zn(2+): His112 and His114. Glu136 (proton donor/acceptor) is an active-site residue. Position 192 (His192) interacts with Zn(2+).

It belongs to the aldolase class II family. MtnB subfamily. Zn(2+) is required as a cofactor.

The protein localises to the cytoplasm. The catalysed reaction is 5-(methylsulfanyl)-D-ribulose 1-phosphate = 5-methylsulfanyl-2,3-dioxopentyl phosphate + H2O. The protein operates within amino-acid biosynthesis; L-methionine biosynthesis via salvage pathway; L-methionine from S-methyl-5-thio-alpha-D-ribose 1-phosphate: step 2/6. Its function is as follows. Catalyzes the dehydration of methylthioribulose-1-phosphate (MTRu-1-P) into 2,3-diketo-5-methylthiopentyl-1-phosphate (DK-MTP-1-P). Functions in the methionine salvage pathway. May play a role in apoptosis. This is Methylthioribulose-1-phosphate dehydratase from Xenopus tropicalis (Western clawed frog).